The chain runs to 167 residues: Photosystem I assembly protein Ycf3 (167 aa).

TPR repeat units follow at residues 35 to 68 (AFSY…EEDP), 72 to 105 (SFIL…NNKL), and 120 to 153 (AVKA…APSN).

Belongs to the Ycf3 family.

Its subcellular location is the plastid. It localises to the chloroplast thylakoid membrane. Functionally, essential for the assembly of the photosystem I (PSI) complex. May act as a chaperone-like factor to guide the assembly of the PSI subunits. This Galdieria sulphuraria (Red alga) protein is Photosystem I assembly protein Ycf3.